The sequence spans 243 residues: 4-hydroxy-tetrahydrodipicolinate reductase (243 aa).

NAD(+) is bound by residues 9 to 14 (GANGKM), 78 to 80 (GTS), and 104 to 107 (APNF). His-134 serves as the catalytic Proton donor/acceptor. His-135 is a (S)-2,3,4,5-tetrahydrodipicolinate binding site. Residue Lys-138 is the Proton donor of the active site. 144 to 145 (GT) serves as a coordination point for (S)-2,3,4,5-tetrahydrodipicolinate.

This sequence belongs to the DapB family.

It is found in the cytoplasm. The catalysed reaction is (S)-2,3,4,5-tetrahydrodipicolinate + NAD(+) + H2O = (2S,4S)-4-hydroxy-2,3,4,5-tetrahydrodipicolinate + NADH + H(+). It catalyses the reaction (S)-2,3,4,5-tetrahydrodipicolinate + NADP(+) + H2O = (2S,4S)-4-hydroxy-2,3,4,5-tetrahydrodipicolinate + NADPH + H(+). It functions in the pathway amino-acid biosynthesis; L-lysine biosynthesis via DAP pathway; (S)-tetrahydrodipicolinate from L-aspartate: step 4/4. Its function is as follows. Catalyzes the conversion of 4-hydroxy-tetrahydrodipicolinate (HTPA) to tetrahydrodipicolinate. The sequence is that of 4-hydroxy-tetrahydrodipicolinate reductase from Legionella pneumophila subsp. pneumophila (strain Philadelphia 1 / ATCC 33152 / DSM 7513).